Consider the following 686-residue polypeptide: MCCYLFQQRERERKGTLLTGEAYKLCETITLLDVLQIEQDIPPIGNSDDNSDDVAKSRKVRNSCMCPPGPPGERGPVGPPGLPGLPAPYYRRPRVPLSNVVFVVVIVIVFFKFQNLDESISRKMRAFGMLYSPDGQAIQLRGMPGPPGPAGPKGLRGYPGFPGPIGLDGPRGLPGTPGSKGERGERGPVGPPGFPGPKGDRGVMTGPFGVHGQHPAPSGPIGHHTTMNIGPPGPPGPPGPPGPAGRDGRHGMKGDRGLPGFDGESKIGPKGETGNPGRDGIPGARGPPGERGEKGDTAFLSTYPRGQSVSTVSSSGSQGPPGPPGPPGVCQVSQCIGVQGPPGIPGEPGRTIIGPQGPPGEKGERGERGETGDKGPPGTPGAASLLNGGKALVGPPGPPGRDGRPGEKGEKGEHGLRGDMGLPGPEGTPGKRGRRGRHGISLVAPNGTINEDLKKLLKTELMPLLIEDISELRGKNVIPGPPGPPGPRGHHGPIGPAGERGPQGLPGHSGERGERGDIGPPGLPGQPGAAESSGNQSGPRGPPGLPGPPGEKGDLGPPGLPGQPGALGLPGHPGPMGLRGPHGTEGKQGKQGPEGPKGYPGPMGPQGPPGNDGEPGIDGRPGPAGEKGDQGIPGLDAPCPTGPDGLPLPYCSWKPMDGKNDVWERRKRATLPRSESVPEERTYIKN.

Disordered stretches follow at residues 42 to 79 and 163 to 444; these read PPIG…PVGP and GPIG…SLVA. Residues 67-79 are compositionally biased toward pro residues; it reads PPGPPGERGPVGP. Triple-helical region regions lie at residues 142 to 201, 230 to 263, and 268 to 296; these read GMPG…KGDR, GPPG…GFDG, and GPKG…EKGD. Positions 231 to 243 are enriched in pro residues; the sequence is PPGPPGPPGPPGP. Residues 246-256 show a composition bias toward basic and acidic residues; the sequence is RDGRHGMKGDR. The segment covering 306-318 has biased composition (low complexity); that stretch reads GQSVSTVSSSGSQ. Composition is skewed to basic and acidic residues over residues 361-373 and 401-417; these read EKGE…ETGD and RDGR…HGLR. The segment at 394-439 is triple-helical region; it reads GPPGPPGRDGRPGEKGEKGEHGLRGDMGLPGPEGTPGKRGRRGRHG. N-linked (GlcNAc...) asparagine glycosylation is found at Asn-446 and Asn-535. Residues 475–650 form a disordered region; it reads KNVIPGPPGP…TGPDGLPLPY (176 aa). Triple-helical region stretches follow at residues 479–536, 538–576, and 577–636; these read PGPP…SGNQ, GPRG…PGPM, and GLRG…PGLD. The segment covering 540–549 has biased composition (pro residues); sequence RGPPGLPGPP. Positions 563–581 are enriched in low complexity; the sequence is QPGALGLPGHPGPMGLRGP.

The protein belongs to the cuticular collagen family. As to quaternary structure, collagen polypeptide chains are complexed within the cuticle by disulfide bonds and other types of covalent cross-links.

Its function is as follows. Nematode cuticles are composed largely of collagen-like proteins. The cuticle functions both as an exoskeleton and as a barrier to protect the worm from its environment. The polypeptide is Putative cuticle collagen 99 (Caenorhabditis briggsae).